The following is a 1434-amino-acid chain: DNA-directed RNA polymerase subunit beta (1434 aa).

It belongs to the RNA polymerase beta chain family. The RNAP catalytic core consists of 2 alpha, 1 beta, 1 beta' and 1 omega subunit. When a sigma factor is associated with the core the holoenzyme is formed, which can initiate transcription.

It catalyses the reaction RNA(n) + a ribonucleoside 5'-triphosphate = RNA(n+1) + diphosphate. DNA-dependent RNA polymerase catalyzes the transcription of DNA into RNA using the four ribonucleoside triphosphates as substrates. The polypeptide is DNA-directed RNA polymerase subunit beta (Ureaplasma urealyticum serovar 10 (strain ATCC 33699 / Western)).